The chain runs to 683 residues: FAD-binding monooxygenase ausC (683 aa).

Asparagine 5 carries N-linked (GlcNAc...) asparagine glycosylation. A helical transmembrane segment spans residues 111-131 (ILIIGAGFGGLLFAVRLIQTG). Residues 150–153 (TWYW), 162–163 (DT), and tyrosine 168 each bind FAD. An NADP(+)-binding site is contributed by 160–162 (MCD). A glycan (N-linked (GlcNAc...) asparagine) is linked at asparagine 286. Residues 310–316 (TGASAVQ) and 333–334 (RT) each bind NADP(+). N-linked (GlcNAc...) asparagine glycans are attached at residues asparagine 525 and asparagine 572.

The protein belongs to the FAD-binding monooxygenase family. It depends on FAD as a cofactor.

The protein resides in the membrane. It carries out the reaction preaustinoid A + AH2 + O2 = preaustinoid A1 + A + H2O. The protein operates within secondary metabolite biosynthesis; terpenoid biosynthesis. In terms of biological role, FAD-binding monooxygenase; part of the gene cluster A that mediates the biosynthesis of austinol and dehydroaustinol, two fungal meroterpenoids. The first step of the pathway is the synthesis of 3,5-dimethylorsellinic acid by the polyketide synthase ausA. 3,5-dimethylorsellinic acid is then prenylated by the polyprenyl transferase ausN. Further epoxidation by the FAD-dependent monooxygenase ausM and cyclization by the probable terpene cyclase ausL lead to the formation of protoaustinoid A. Protoaustinoid A is then oxidized to spiro-lactone preaustinoid A3 by the combined action of the FAD-binding monooxygenases ausB and ausC, and the dioxygenase ausE. Acid-catalyzed keto-rearrangement and ring contraction of the tetraketide portion of preaustinoid A3 by ausJ lead to the formation of preaustinoid A4. The aldo-keto reductase ausK, with the help of ausH, is involved in the next step by transforming preaustinoid A4 into isoaustinone which is in turn hydroxylated by the P450 monooxygenase ausI to form austinolide. Finally, the cytochrome P450 monooxygenase ausG modifies austinolide to austinol. Austinol can be further modified to dehydroaustinol which forms a diffusible complex with diorcinol that initiates conidiation. Due to genetic rearrangements of the clusters and the subsequent loss of some enzymes, the end products of the Emericella nidulans austinoid biosynthesis clusters are austinol and dehydroaustinol, even if additional enzymes, such as the O-acetyltransferase ausQ and the cytochrome P450 monooxygenase ausR are still functional. The protein is FAD-binding monooxygenase ausC of Emericella nidulans (strain FGSC A4 / ATCC 38163 / CBS 112.46 / NRRL 194 / M139) (Aspergillus nidulans).